A 484-amino-acid polypeptide reads, in one-letter code: MKKWLMVQGTTSDAGKSVLVAGLCRVLARRGIQVCPFKPQNMALNSAVTPDGGEIGRAQAVQAQACGIAPSVHMNPVLLKPNSDTGAQVILQGRALSNMEANAYHDYKKVAMDTVMDSFQRLQQEYEAIMIEGAGSPAEINLRENDIANMGFAEKADVPVIIVADIDRGGVFAHLYGTLALLSESEQARVKGFVINRFRGDIGLLQSGLDWLEQKTGKPVIGVLPYLHGFDLEAEDAIAAQQNLSADRQLRVAVPVFTRISNHTDFDPLRLNPNIDFRYVGQGESLSGADLIILPGSKSTRADLAYLRSQGWDKEILRHLRLGGKVMGICGGFQMLGEWVHDPLGIEGEAGSSEGLGLFAMQTELTAEKRLTNVQGHLTLDGQTVAAQGYEIHAGRSSWAADQKSPIILSDGSLDGLVSDCNQGFGTYLHGIFDRPETALRICQWAGAKEIEAYDHRAAQERAIDRIADAIEQHLNLTLLWPDL.

The 190-residue stretch at 249 to 438 (QLRVAVPVFT…LHGIFDRPET (190 aa)) folds into the GATase cobBQ-type domain. The active-site Nucleophile is the cysteine 330. Residue histidine 430 is part of the active site.

Belongs to the CobB/CobQ family. CobQ subfamily.

Its pathway is cofactor biosynthesis; adenosylcobalamin biosynthesis. In terms of biological role, catalyzes amidations at positions B, D, E, and G on adenosylcobyrinic A,C-diamide. NH(2) groups are provided by glutamine, and one molecule of ATP is hydrogenolyzed for each amidation. This is Cobyric acid synthase from Vibrio cholerae serotype O1 (strain ATCC 39541 / Classical Ogawa 395 / O395).